Here is a 208-residue protein sequence, read N- to C-terminus: Effector protein MavE (208 aa).

An NPxY eukaryotic motif motif is present at residues 77–80 (NPRY). A helical membrane pass occupies residues 184–204 (VLFPFVAATVAVAATAASVLF).

In terms of assembly, homotrimer.

Its subcellular location is the secreted. It localises to the host vacuole. It is found in the host pathogen-containing vacuole. The protein resides in the host pathogen-containing vacuole membrane. In terms of biological role, virulence effector that is indispensable for endoplasmic reticulum (ER)-mediated remodeling of the Legionella pneumophila-containing vacuole (LCV) and lysosomal evasion. Essential for intracellular replication in human monocyte-derived macrophages (hMDMs) and amoebae, as well as for intrapulmonary proliferation in mice. The polypeptide is Effector protein MavE (Legionella pneumophila subsp. pneumophila (strain Philadelphia 1 / ATCC 33152 / DSM 7513)).